We begin with the raw amino-acid sequence, 170 residues long: Bifunctional protein PyrR (170 aa).

The PRPP-binding motif lies at leucine 90–threonine 102.

It belongs to the purine/pyrimidine phosphoribosyltransferase family. PyrR subfamily.

It carries out the reaction UMP + diphosphate = 5-phospho-alpha-D-ribose 1-diphosphate + uracil. In terms of biological role, regulates the transcription of the pyrimidine nucleotide (pyr) operon in response to exogenous pyrimidines. Also displays a weak uracil phosphoribosyltransferase activity which is not physiologically significant. This is Bifunctional protein PyrR from Pseudomonas aeruginosa (strain LESB58).